A 190-amino-acid chain; its full sequence is Shikimate kinase (190 aa).

22-27 (GSGKST) serves as a coordination point for ATP. Serine 26 is a binding site for Mg(2+). Residues aspartate 44, arginine 68, and glycine 90 each contribute to the substrate site. Arginine 127 provides a ligand contact to ATP. Arginine 146 serves as a coordination point for substrate.

Belongs to the shikimate kinase family. Monomer. Requires Mg(2+) as cofactor.

The protein resides in the cytoplasm. It catalyses the reaction shikimate + ATP = 3-phosphoshikimate + ADP + H(+). Its pathway is metabolic intermediate biosynthesis; chorismate biosynthesis; chorismate from D-erythrose 4-phosphate and phosphoenolpyruvate: step 5/7. Functionally, catalyzes the specific phosphorylation of the 3-hydroxyl group of shikimic acid using ATP as a cosubstrate. The protein is Shikimate kinase of Microcystis aeruginosa (strain NIES-843 / IAM M-2473).